A 790-amino-acid polypeptide reads, in one-letter code: cAMP and cAMP-inhibited cGMP 3',5'-cyclic phosphodiesterase 10A (790 aa).

Residues 290–291 (RC), 334–335 (IA), Thr368, Gln387, and His519 contribute to the 3',5'-cyclic AMP site. The PDEase domain maps to 446–763 (TSEEWQGLMR…NQWEKVIRGE (318 aa)). His519 (proton donor) is an active-site residue. Residue His519 participates in 3',5'-cyclic GMP binding. 4 residues coordinate a divalent metal cation: His523, His557, Asp558, and Asp668. Gln720 provides a ligand contact to 3',5'-cyclic AMP. Gln720 serves as a coordination point for 3',5'-cyclic GMP. Residues 768-790 (WISGPGPAPSKSTPEKLNVKVED) are disordered. Over residues 780-790 (TPEKLNVKVED) the composition is skewed to basic and acidic residues.

Belongs to the cyclic nucleotide phosphodiesterase family. In terms of assembly, homodimer. It depends on a divalent metal cation as a cofactor. Detected in striatum (at protein level). Detected in testis and brain.

It is found in the cytoplasm. The protein resides in the cytosol. The catalysed reaction is a nucleoside 3',5'-cyclic phosphate + H2O = a nucleoside 5'-phosphate + H(+). The enzyme catalyses 3',5'-cyclic AMP + H2O = AMP + H(+). It catalyses the reaction 3',5'-cyclic GMP + H2O = GMP + H(+). It participates in purine metabolism; 3',5'-cyclic AMP degradation; AMP from 3',5'-cyclic AMP: step 1/1. It functions in the pathway purine metabolism; 3',5'-cyclic GMP degradation; GMP from 3',5'-cyclic GMP: step 1/1. In terms of biological role, plays a role in signal transduction by regulating the intracellular concentration of cyclic nucleotides. Can hydrolyze both cAMP and cGMP, but has higher affinity for cAMP and is more efficient with cAMP as substrate. May play a critical role in regulating cAMP and cGMP levels in the striatum, a region of the brain that contributes to the control of movement and cognition. This Mus musculus (Mouse) protein is cAMP and cAMP-inhibited cGMP 3',5'-cyclic phosphodiesterase 10A (Pde10a).